The primary structure comprises 91 residues: RNA-binding protein Hfq (91 aa).

Residues 9–68 (DPFLNALRRERVPVSIYLVNGIKLQGQVESFDQFVILLKNTVSQMVYKHAISTVVPSRPF) enclose the Sm domain. Residues 66–91 (RPFNVGSHQGGSSNYNAQQDDSAGEQ) form a disordered region. Residues 71–91 (GSHQGGSSNYNAQQDDSAGEQ) are compositionally biased toward polar residues.

This sequence belongs to the Hfq family. Homohexamer.

Its function is as follows. RNA chaperone that binds small regulatory RNA (sRNAs) and mRNAs to facilitate mRNA translational regulation in response to envelope stress, environmental stress and changes in metabolite concentrations. Also binds with high specificity to tRNAs. This Shewanella amazonensis (strain ATCC BAA-1098 / SB2B) protein is RNA-binding protein Hfq.